Reading from the N-terminus, the 207-residue chain is Protein THEM6 (207 aa).

An N-terminal signal peptide occupies residues 1-21; it reads MLELLVASLSLALAFFALLDG. N188 is a glycosylation site (N-linked (GlcNAc...) asparagine). S199 is subject to Phosphoserine.

The protein belongs to the THEM6 family.

The protein resides in the secreted. The polypeptide is Protein THEM6 (Them6) (Mus musculus (Mouse)).